The following is a 280-amino-acid chain: Bis(5'-nucleosyl)-tetraphosphatase, symmetrical (280 aa).

This sequence belongs to the Ap4A hydrolase family.

The enzyme catalyses P(1),P(4)-bis(5'-adenosyl) tetraphosphate + H2O = 2 ADP + 2 H(+). Hydrolyzes diadenosine 5',5'''-P1,P4-tetraphosphate to yield ADP. This is Bis(5'-nucleosyl)-tetraphosphatase, symmetrical from Escherichia coli O17:K52:H18 (strain UMN026 / ExPEC).